The sequence spans 347 residues: Ferrochelatase (347 aa).

His-193 and Glu-273 together coordinate Fe cation.

The protein belongs to the ferrochelatase family.

The protein localises to the cytoplasm. It catalyses the reaction heme b + 2 H(+) = protoporphyrin IX + Fe(2+). The protein operates within porphyrin-containing compound metabolism; protoheme biosynthesis; protoheme from protoporphyrin-IX: step 1/1. In terms of biological role, catalyzes the ferrous insertion into protoporphyrin IX. This is Ferrochelatase from Rickettsia canadensis (strain McKiel).